Reading from the N-terminus, the 444-residue chain is Homogentisate 1,2-dioxygenase (444 aa).

Residue His298 is the Proton acceptor of the active site. Fe cation is bound by residues His341 and Glu347. 2 residues coordinate homogentisate: Tyr356 and His377. His377 serves as a coordination point for Fe cation.

The protein belongs to the homogentisate dioxygenase family. As to quaternary structure, hexamer; dimer of trimers. Requires Fe cation as cofactor.

The catalysed reaction is homogentisate + O2 = 4-maleylacetoacetate + H(+). It participates in amino-acid degradation; L-phenylalanine degradation; acetoacetate and fumarate from L-phenylalanine: step 4/6. Its function is as follows. Involved in the catabolism of homogentisate (2,5-dihydroxyphenylacetate or 2,5-OH-PhAc), a central intermediate in the degradation of phenylalanine and tyrosine. Catalyzes the oxidative ring cleavage of the aromatic ring of homogentisate to yield maleylacetoacetate. This Burkholderia lata (strain ATCC 17760 / DSM 23089 / LMG 22485 / NCIMB 9086 / R18194 / 383) protein is Homogentisate 1,2-dioxygenase.